A 919-amino-acid polypeptide reads, in one-letter code: Probable dipeptidyl-aminopeptidase B (919 aa).

The segment at 1–89 (MGANSRVNDD…DGYVPSGGKP (89 aa)) is disordered. Over 1-95 (MGANSRVNDD…GGKPAQRRTR (95 aa)) the chain is Cytoplasmic. A compositionally biased stretch (low complexity) spans 27-38 (DSSSTASISLTL). Over residues 44–55 (HTATEPSKSTNG) the composition is skewed to polar residues. Residues 96 to 116 (IVFWLLVALCVGGWAMAFIIM) form a helical; Signal-anchor for type II membrane protein membrane-spanning segment. Residues 117 to 919 (ATSPNNRHST…RVIRRLLHFG (803 aa)) lie on the Vacuolar side of the membrane. Residues 121–150 (NNRHSTSDSSSGGSESEIVKPNTPHDGKKI) form a disordered region. Positions 127 to 136 (SDSSSGGSES) are enriched in low complexity. 5 N-linked (GlcNAc...) asparagine glycosylation sites follow: Asn207, Asn303, Asn355, Asn577, and Asn665. Ser760 functions as the Charge relay system in the catalytic mechanism. N-linked (GlcNAc...) asparagine glycosylation is found at Asn814 and Asn819. Active-site charge relay system residues include Asp837 and His870.

The protein belongs to the peptidase S9B family.

Its subcellular location is the vacuole membrane. The enzyme catalyses Release of an N-terminal dipeptide, Xaa-Yaa-|-Zaa-, from a polypeptide, preferentially when Yaa is Pro, provided Zaa is neither Pro nor hydroxyproline.. Functionally, type IV dipeptidyl-peptidase which removes N-terminal dipeptides sequentially from polypeptides having unsubstituted N-termini provided that the penultimate residue is proline. The polypeptide is Probable dipeptidyl-aminopeptidase B (DAPB) (Arthroderma otae (strain ATCC MYA-4605 / CBS 113480) (Microsporum canis)).